The chain runs to 1010 residues: Ubiquitin conjugation factor E4 (1010 aa).

The segment at 13–70 is disordered; sequence AKLQQTNSEANSSKEPKESNIAPEPKKPDLKKRFIGSKATTSNSEQKEISPPVTSGAP. Over residues 24-44 the composition is skewed to basic and acidic residues; sequence SSKEPKESNIAPEPKKPDLKK. Residues 930–1004 enclose the U-box domain; the sequence is DIPDYFLDPL…NTFLKSKRNK (75 aa).

The protein belongs to the ubiquitin conjugation factor E4 family.

It localises to the cytoplasm. The protein resides in the nucleus. Its pathway is protein modification; protein ubiquitination. E4 ubiquitin chain-elongation enzyme specifically involved in polyubiquitin chain assembly. Binds to cdc48 and elongates mono- and diubiquitinated ERAD substrates presented by the ufd1-npl4-cdc48 (UNC) AAA ATPase complex to a chain length of 4 to 6 ubiquitin moieties. Delivers these polyubiquitinated substrates to downstream ERAD components, which target them to the proteasome. Enhances ubiquitination at 'Lys-48', but not at 'Lys-29' of the Ub moiety. The sequence is that of Ubiquitin conjugation factor E4 (ufd2) from Schizosaccharomyces pombe (strain 972 / ATCC 24843) (Fission yeast).